The sequence spans 448 residues: CCA-adding enzyme (448 aa).

Residues Ser52 and Lys55 each contribute to the ATP site. Ser52 and Lys55 together coordinate CTP. Mg(2+)-binding residues include Asp64, Asp66, and Asp118. The ATP site is built by His141, Lys160, and Tyr169. His141, Lys160, and Tyr169 together coordinate CTP.

It belongs to the tRNA nucleotidyltransferase/poly(A) polymerase family. Archaeal CCA-adding enzyme subfamily. Homodimer. The cofactor is Mg(2+).

The enzyme catalyses a tRNA precursor + 2 CTP + ATP = a tRNA with a 3' CCA end + 3 diphosphate. It carries out the reaction a tRNA with a 3' CCA end + 2 CTP + ATP = a tRNA with a 3' CCACCA end + 3 diphosphate. In terms of biological role, catalyzes the addition and repair of the essential 3'-terminal CCA sequence in tRNAs without using a nucleic acid template. Adds these three nucleotides in the order of C, C, and A to the tRNA nucleotide-73, using CTP and ATP as substrates and producing inorganic pyrophosphate. tRNA 3'-terminal CCA addition is required both for tRNA processing and repair. Also involved in tRNA surveillance by mediating tandem CCA addition to generate a CCACCA at the 3' terminus of unstable tRNAs. While stable tRNAs receive only 3'-terminal CCA, unstable tRNAs are marked with CCACCA and rapidly degraded. This is CCA-adding enzyme from Pyrococcus abyssi (strain GE5 / Orsay).